The primary structure comprises 349 residues: Core protein VP7 (349 aa).

N-linked (GlcNAc...) asparagine; by host glycosylation is present at N45.

It belongs to the orbivirus VP7 family. As to quaternary structure, homotrimer.

It is found in the virion. Its function is as follows. Major structural core protein; binds to structural protein VP3. Constitutes the surface of the AHSV core. The polypeptide is Core protein VP7 (Segment-7) (Camelus dromedarius (Dromedary)).